The primary structure comprises 572 residues: Glutamate--tRNA ligase (572 aa).

Residues 112 to 122 (PNPNGPPSLGN) carry the 'HIGH' region motif.

This sequence belongs to the class-I aminoacyl-tRNA synthetase family. Glutamate--tRNA ligase type 2 subfamily.

The protein resides in the cytoplasm. The catalysed reaction is tRNA(Glu) + L-glutamate + ATP = L-glutamyl-tRNA(Glu) + AMP + diphosphate. Functionally, catalyzes the attachment of glutamate to tRNA(Glu) in a two-step reaction: glutamate is first activated by ATP to form Glu-AMP and then transferred to the acceptor end of tRNA(Glu). In Methanocella arvoryzae (strain DSM 22066 / NBRC 105507 / MRE50), this protein is Glutamate--tRNA ligase.